A 363-amino-acid chain; its full sequence is Flagellar P-ring protein (363 aa).

The signal sequence occupies residues 1–20 (MKYRLIVALAMLVLSLPSQA).

The protein belongs to the FlgI family. The basal body constitutes a major portion of the flagellar organelle and consists of four rings (L,P,S, and M) mounted on a central rod.

It localises to the periplasm. Its subcellular location is the bacterial flagellum basal body. Assembles around the rod to form the L-ring and probably protects the motor/basal body from shearing forces during rotation. This chain is Flagellar P-ring protein, found in Shewanella sp. (strain ANA-3).